Consider the following 340-residue polypeptide: Mitochondrial glycine transporter (340 aa).

Solcar repeat units follow at residues 23–108, 128–218, and 237–325; these read PKTL…ARNG, LSPF…FKND, and RSTI…LIKS. The next 6 membrane-spanning stretches (helical) occupy residues 29–54, 83–109, 134–159, 193–216, 241–267, and 300–318; these read LISGASAGLISAISLQPFDLLKTRLQ, GALPSTLRTSVGAGLYFTILSSARNGI, LATGFIVRAVVGIITMPITIVKTRYE, GSFATLARDCPYAGMYVLFYELFK, INTSAAILAASVSTTITAPFDAIKTRL, and GLSLRFGRKGLSSGISWCI.

Belongs to the mitochondrial carrier (TC 2.A.29) family. SLC25A38 subfamily.

The protein resides in the mitochondrion inner membrane. The catalysed reaction is glycine(in) = glycine(out). Its function is as follows. Mitochondrial glycine transporter that imports glycine into the mitochondrial matrix. Plays an important role in providing glycine for the first enzymatic step in heme biosynthesis, the condensation of glycine with succinyl-CoA to produce 5-aminolevulinate (ALA) in the mitochondrial matrix. The polypeptide is Mitochondrial glycine transporter (Debaryomyces hansenii (strain ATCC 36239 / CBS 767 / BCRC 21394 / JCM 1990 / NBRC 0083 / IGC 2968) (Yeast)).